The chain runs to 243 residues: Purine nucleoside phosphorylase YfiH (243 aa).

Residues His-71, Cys-107, and His-124 each coordinate Zn(2+).

The protein belongs to the purine nucleoside phosphorylase YfiH/LACC1 family. In terms of assembly, homodimer. Requires Cu(2+) as cofactor. It depends on Zn(2+) as a cofactor.

The catalysed reaction is adenosine + phosphate = alpha-D-ribose 1-phosphate + adenine. It catalyses the reaction S-methyl-5'-thioadenosine + phosphate = 5-(methylsulfanyl)-alpha-D-ribose 1-phosphate + adenine. It carries out the reaction inosine + phosphate = alpha-D-ribose 1-phosphate + hypoxanthine. The enzyme catalyses adenosine + H2O + H(+) = inosine + NH4(+). Purine nucleoside enzyme that catalyzes the phosphorolysis of adenosine and inosine nucleosides, yielding D-ribose 1-phosphate and the respective free bases, adenine and hypoxanthine. Also catalyzes the phosphorolysis of S-methyl-5'-thioadenosine into adenine and S-methyl-5-thio-alpha-D-ribose 1-phosphate. Also has adenosine deaminase activity. May also act as a polyphenol oxidase: able to oxidize syringaldazine and 2,2'-azino-bis(3-ethylbenzthiazoline-6-sulfonic acid) (ABTS) in vitro. In Escherichia coli (strain K12), this protein is Purine nucleoside phosphorylase YfiH.